The primary structure comprises 290 residues: Acetyl-coenzyme A carboxylase carboxyl transferase subunit beta (290 aa).

One can recognise a CoA carboxyltransferase N-terminal domain in the interval 27 to 290 (LWVKCPSCEA…LQRQPADALA (264 aa)). The Zn(2+) site is built by cysteine 31, cysteine 34, cysteine 50, and cysteine 53. Residues 31-53 (CPSCEAVLYRNDVDANLHVCPKC) form a C4-type zinc finger.

The protein belongs to the AccD/PCCB family. Acetyl-CoA carboxylase is a heterohexamer composed of biotin carboxyl carrier protein (AccB), biotin carboxylase (AccC) and two subunits each of ACCase subunit alpha (AccA) and ACCase subunit beta (AccD). Requires Zn(2+) as cofactor.

The protein localises to the cytoplasm. The enzyme catalyses N(6)-carboxybiotinyl-L-lysyl-[protein] + acetyl-CoA = N(6)-biotinyl-L-lysyl-[protein] + malonyl-CoA. It participates in lipid metabolism; malonyl-CoA biosynthesis; malonyl-CoA from acetyl-CoA: step 1/1. Functionally, component of the acetyl coenzyme A carboxylase (ACC) complex. Biotin carboxylase (BC) catalyzes the carboxylation of biotin on its carrier protein (BCCP) and then the CO(2) group is transferred by the transcarboxylase to acetyl-CoA to form malonyl-CoA. This is Acetyl-coenzyme A carboxylase carboxyl transferase subunit beta from Burkholderia multivorans (strain ATCC 17616 / 249).